The sequence spans 464 residues: Meiotic plaque component protein 54 (464 aa).

The segment at 71–102 (SISTTITPNKSSLKSPRGKRASKNSFDNETKL) is disordered. Coiled-coil stretches lie at residues 99–119 (ETKL…VNRC), 156–193 (KAEC…DHLL), and 231–365 (SINS…LQTQ).

In terms of assembly, interacts directly with SPO21/MPC70, NUD1, SPO74 and SPC42. Probable component of a spindle pole body (SPB) complex composed of ADY3, SSP1, DON1, MPC54, SPO21/MPC70, NUD1 and CNM67.

The protein resides in the prospore membrane. The protein localises to the cytoplasm. Its subcellular location is the cytoskeleton. It localises to the microtubule organizing center. It is found in the spindle pole body. The protein resides in the spindle pole. In terms of biological role, involved in the pathway that organizes the shaping and sizing of the prospore membrane (PSM) during sporulation. The sequence is that of Meiotic plaque component protein 54 (MPC54) from Saccharomyces cerevisiae (strain ATCC 204508 / S288c) (Baker's yeast).